The chain runs to 411 residues: Arginine deiminase (411 aa).

Residue Cys-401 is the Amidino-cysteine intermediate of the active site.

This sequence belongs to the arginine deiminase family.

It localises to the cytoplasm. It catalyses the reaction L-arginine + H2O = L-citrulline + NH4(+). It participates in amino-acid degradation; L-arginine degradation via ADI pathway; carbamoyl phosphate from L-arginine: step 1/2. The protein is Arginine deiminase of Staphylococcus aureus (strain JH9).